The primary structure comprises 322 residues: Phosphatidylserine decarboxylase proenzyme (322 aa).

Residues Asp-90, His-147, and Ser-254 each act as charge relay system; for autoendoproteolytic cleavage activity in the active site. The Schiff-base intermediate with substrate; via pyruvic acid; for decarboxylase activity role is filled by Ser-254. The residue at position 254 (Ser-254) is a Pyruvic acid (Ser); by autocatalysis.

This sequence belongs to the phosphatidylserine decarboxylase family. PSD-B subfamily. Prokaryotic type I sub-subfamily. In terms of assembly, heterodimer of a large membrane-associated beta subunit and a small pyruvoyl-containing alpha subunit. Pyruvate serves as cofactor. In terms of processing, is synthesized initially as an inactive proenzyme. Formation of the active enzyme involves a self-maturation process in which the active site pyruvoyl group is generated from an internal serine residue via an autocatalytic post-translational modification. Two non-identical subunits are generated from the proenzyme in this reaction, and the pyruvate is formed at the N-terminus of the alpha chain, which is derived from the carboxyl end of the proenzyme. The autoendoproteolytic cleavage occurs by a canonical serine protease mechanism, in which the side chain hydroxyl group of the serine supplies its oxygen atom to form the C-terminus of the beta chain, while the remainder of the serine residue undergoes an oxidative deamination to produce ammonia and the pyruvoyl prosthetic group on the alpha chain. During this reaction, the Ser that is part of the protease active site of the proenzyme becomes the pyruvoyl prosthetic group, which constitutes an essential element of the active site of the mature decarboxylase.

Its subcellular location is the cell membrane. The catalysed reaction is a 1,2-diacyl-sn-glycero-3-phospho-L-serine + H(+) = a 1,2-diacyl-sn-glycero-3-phosphoethanolamine + CO2. The protein operates within phospholipid metabolism; phosphatidylethanolamine biosynthesis; phosphatidylethanolamine from CDP-diacylglycerol: step 2/2. In terms of biological role, catalyzes the formation of phosphatidylethanolamine (PtdEtn) from phosphatidylserine (PtdSer). This is Phosphatidylserine decarboxylase proenzyme from Shigella dysenteriae serotype 1 (strain Sd197).